Reading from the N-terminus, the 455-residue chain is Succinyl-CoA--L-malate CoA-transferase alpha subunit (455 aa).

Positions 1-58 are disordered; that stretch reads MAKASRLTRSTGQPTEVSEGQVTGTSEMPPTGEEPSGHAESKPPASDPMSTPGTGQEQ. Polar residues-rich tracts occupy residues 7–28 and 48–58; these read LTRS…TSEM and PMSTPGTGQEQ. The Nucleophile role is filled by Asp227.

It belongs to the CoA-transferase III family. In terms of assembly, forms a large complex composed of six heterodimers (alpha, beta).

The catalysed reaction is succinyl-CoA + (S)-malate = (S)-malyl-CoA + succinate. It catalyses the reaction (3S)-citramalate + succinyl-CoA = (3S)-citramalyl-CoA + succinate. Functionally, involved in the 3-hydroxypropionate cycle used for autotrophic carbon dioxide fixation. Catalyzes the transfer of CoA moiety from succinyl-CoA to L-malate to yield L-malyl-CoA. This chain is Succinyl-CoA--L-malate CoA-transferase alpha subunit (smtA), found in Chloroflexus aurantiacus (strain ATCC 29366 / DSM 635 / J-10-fl).